The chain runs to 35 residues: MGKGRIRVEERIKAETDAEMQKATLLDQTQTKKGK.

This is an uncharacterized protein from Bacillus subtilis (strain 168).